The following is a 785-amino-acid chain: Tripartite terminase subunit 1 (785 aa).

The C3H1-type zinc finger occupies 201–229 (CAVCFEELCVTANQGATIARRLADRICNH). The segment at 439–487 (GGATGGAEEEEPRAAAEEGGRRRGAGTPASEDGERGPEPGAQGPESWGD) is disordered. Over residues 450–459 (PRAAAEEGGR) the composition is skewed to basic and acidic residues. 696-703 (FASVYRCG) is a binding site for ATP.

It belongs to the herpesviridae TRM1 protein family. In terms of assembly, associates with TRM2 and TRM3 to form the tripartite terminase complex. Interacts with portal protein.

Its subcellular location is the host nucleus. Functionally, component of the molecular motor that translocates viral genomic DNA in empty capsid during DNA packaging. Forms a tripartite terminase complex together with TRM2 and TRM3 in the host cytoplasm. Once the complex reaches the host nucleus, it interacts with the capsid portal vertex. This portal forms a ring in which genomic DNA is translocated into the capsid. TRM1 carries an endonuclease activity that plays an important role for the cleavage of concatemeric viral DNA into unit length genomes. This chain is Tripartite terminase subunit 1, found in Human herpesvirus 2 (strain HG52) (HHV-2).